Consider the following 613-residue polypeptide: Forkhead box protein O (613 aa).

4 disordered regions span residues 39 to 90 (RARS…KNSS), 182 to 205 (KSVRRRAASMETSRYEKRRGRAKK), 217 to 269 (GLND…RLSP), and 317 to 360 (QGFS…PASG). The residue at position 44 (T44) is a Phosphothreonine; by PKB/AKT1. The span at 63-80 (TKASNQQLAPGDSQQAIQ) shows a compositional bias: polar residues. The residue at position 75 (S75) is a Phosphoserine. Over residues 81-90 (NANAAKKNSS) the composition is skewed to low complexity. Positions 95 to 201 (WGNLSYADLI…ETSRYEKRRG (107 aa)) form a DNA-binding region, fork-head. A Phosphoserine; by PKB/AKT1 modification is found at S190. Composition is skewed to polar residues over residues 221–230 (ATPSPSSSVS) and 256–265 (RASSNASSCG). S259 is modified (phosphoserine; by PKB/AKT1). Residues S262, S263, and S268 each carry the phosphoserine modification. Over residues 327–336 (SQPPPPPYQP) the composition is skewed to pro residues. A compositionally biased stretch (low complexity) spans 337-353 (PQHQQAQQQQQQQSPYA).

Interacts with melt.

Its subcellular location is the cytoplasm. It is found in the nucleus. Its function is as follows. Transcription factor involved in the regulation of the insulin signaling pathway. Consistently activates both the downstream target Thor\d4EBP and the feedback control target InR. Involved in negative regulation of the cell cycle, modulating cell growth and proliferation. In response to cellular stresses, such as nutrient deprivation or increased levels of reactive oxygen species, foxo is activated and inhibits growth through the action of target genes such as Thor. Foxo activated in the adult fat body can regulate lifespan in adults; an insulin peptide itself may function as one secondary messenger of insulin-regulated aging. Also regulates Lip4, homolog of human acid lipases, thereby acting as a key modulator of lipid metabolism by insulin signaling and integrates insulin responses to glucose and lipid homeostasis. The protein is Forkhead box protein O of Drosophila melanogaster (Fruit fly).